Reading from the N-terminus, the 451-residue chain is Protein-tyrosine kinase 6 (451 aa).

In terms of domain architecture, SH3 spans 8–72 (HLGPKYVGLW…PHNYLAERET (65 aa)). Phosphotyrosine; by autocatalysis is present on residues Tyr-13, Tyr-61, Tyr-66, and Tyr-114. The region spanning 78–170 (WFFGCISRSE…SHGLRLAAPC (93 aa)) is the SH2 domain. The interval 171–190 (RKHEPEPLPHWDDWERPREE) is linker. One can recognise a Protein kinase domain in the interval 191–445 (FTLCRKLGSG…ALRERLSSFT (255 aa)). ATP contacts are provided by residues 197–205 (LGSGYFGEV) and Lys-219. The active-site Proton acceptor is Asp-312. Phosphotyrosine; by autocatalysis occurs at positions 342 and 351. Tyr-447 bears the Phosphotyrosine mark.

This sequence belongs to the protein kinase superfamily. Tyr protein kinase family. BRK/PTK6/SIK subfamily. As to quaternary structure, interacts with GAP-A.p65. Interacts (via SH3 and SH2 domains) with KHDRBS1. Interacts (via SH3 and SH2 domains) with phosphorylated IRS4. Interacts with ADAM15. Interacts (via SH3 domain) with SFPQ. Interacts with EGFR and ERBB2. Interacts with STAP2. Interacts with PNX. Interacts with SFPQ. Interacts with PTK/ATK. Interacts with CTNNB1. In terms of processing, autophosphorylated. Autophosphorylation of Tyr-342 leads to an increase of kinase activity. Tyr-447 binds to the SH2 domain when phosphorylated and negatively regulates kinase activity. Epithelia-specific. Very high level in colon and high levels in small intestine and prostate, and low levels in some fetal tissues. Not expressed in breast or ovarian tissue but expressed in high percentage of breast and ovarian cancers. Also overexpressed in some metastatic melanomas, lymphomas, colon cancers, squamous cell carcinomas and prostate cancers. Also found in melanocytes. Not expressed in heart, brain, placenta, lung, liver, skeletal muscle, kidney and pancreas. Isoform 2 is present in prostate epithelial cell lines derived from normal prostate and prostate adenocarcinomas, as well as in a variety of cell lines.

The protein resides in the cytoplasm. It is found in the nucleus. The protein localises to the cell projection. It localises to the ruffle. Its subcellular location is the membrane. It catalyses the reaction L-tyrosyl-[protein] + ATP = O-phospho-L-tyrosyl-[protein] + ADP + H(+). Activated by EGF, NRG1 and IGF1. Inhibited by SOCS3 to phosphorylate STAT3. Stabilized in the inactive form by an association between the SH3 domain and the SH2-TK linker region. Interaction between Trp-184 within SH2-TK linker region and the catalytic domain appears essential for positive regulation of kinase activity. Its function is as follows. Non-receptor tyrosine-protein kinase implicated in the regulation of a variety of signaling pathways that control the differentiation and maintenance of normal epithelia, as well as tumor growth. Function seems to be context dependent and differ depending on cell type, as well as its intracellular localization. A number of potential nuclear and cytoplasmic substrates have been identified. These include the RNA-binding proteins: KHDRBS1/SAM68, KHDRBS2/SLM1, KHDRBS3/SLM2 and SFPQ/PSF; transcription factors: STAT3 and STAT5A/B and a variety of signaling molecules: ARHGAP35/p190RhoGAP, PXN/paxillin, BTK/ATK, STAP2/BKS. Phosphorylates the GTPase-activating protein ARAP1 following EGF stimulation which enhances EGFR signaling by delaying EGFR down-regulation. Also associates with a variety of proteins that are likely upstream of PTK6 in various signaling pathways, or for which PTK6 may play an adapter-like role. These proteins include ADAM15, EGFR, ERBB2, ERBB3 and IRS4. In normal or non-tumorigenic tissues, PTK6 promotes cellular differentiation and apoptosis. In tumors PTK6 contributes to cancer progression by sensitizing cells to mitogenic signals and enhancing proliferation, anchorage-independent survival and migration/invasion. Association with EGFR, ERBB2, ERBB3 may contribute to mammary tumor development and growth through enhancement of EGF-induced signaling via BTK/AKT and PI3 kinase. Contributes to migration and proliferation by contributing to EGF-mediated phosphorylation of ARHGAP35/p190RhoGAP, which promotes association with RASA1/p120RasGAP, inactivating RhoA while activating RAS. EGF stimulation resulted in phosphorylation of PNX/Paxillin by PTK6 and activation of RAC1 via CRK/CrKII, thereby promoting migration and invasion. PTK6 activates STAT3 and STAT5B to promote proliferation. Nuclear PTK6 may be important for regulating growth in normal epithelia, while cytoplasmic PTK6 might activate oncogenic signaling pathways. Inhibits PTK6 phosphorylation and PTK6 association with other tyrosine-phosphorylated proteins. The chain is Protein-tyrosine kinase 6 (PTK6) from Homo sapiens (Human).